Reading from the N-terminus, the 637-residue chain is Threonine--tRNA ligase (637 aa).

The TGS domain occupies 1 to 61 (MITITLPDSS…ATDAAVRLIT (61 aa)). The catalytic stretch occupies residues 238–528 (DHRKLGAELD…LIEHFAGKFP (291 aa)). Zn(2+)-binding residues include cysteine 329, histidine 380, and histidine 505.

This sequence belongs to the class-II aminoacyl-tRNA synthetase family. Homodimer. It depends on Zn(2+) as a cofactor.

The protein resides in the cytoplasm. It carries out the reaction tRNA(Thr) + L-threonine + ATP = L-threonyl-tRNA(Thr) + AMP + diphosphate + H(+). Functionally, catalyzes the attachment of threonine to tRNA(Thr) in a two-step reaction: L-threonine is first activated by ATP to form Thr-AMP and then transferred to the acceptor end of tRNA(Thr). Also edits incorrectly charged L-seryl-tRNA(Thr). This chain is Threonine--tRNA ligase, found in Desulfosudis oleivorans (strain DSM 6200 / JCM 39069 / Hxd3) (Desulfococcus oleovorans).